The following is a 477-amino-acid chain: Delayed-rectifier potassium channel regulatory subunit KCNS2 (477 aa).

Topologically, residues 1-184 are cytoplasmic; sequence MTRQSLWDVS…LALDNPGYSV (184 aa). Residues 185–206 traverse the membrane as a helical segment; the sequence is LSRVFSVLSILVVLGSIITMCL. Residues 207–225 lie on the Extracellular side of the membrane; that stretch reads NSLPDFQIPDSQGNPGEDP. Residues 226-248 traverse the membrane as a helical segment; that stretch reads RFEIVEHFGIAWFTFELVARFAV. Over 249 to 259 the chain is Cytoplasmic; that stretch reads APDFLKFFKNA. A helical membrane pass occupies residues 260–280; sequence LNLIDLMSIVPFYITLVVNLV. Residues 281 to 290 lie on the Extracellular side of the membrane; it reads VESSPTLANL. A helical; Voltage-sensor membrane pass occupies residues 291–311; it reads GRVAQVLRLMRIFRILKLARH. At 312–326 the chain is on the cytoplasmic side; sequence STGLRSLGATLKYSY. Residues 327-348 traverse the membrane as a helical segment; that stretch reads KEVGLLLLYLSVGISIFSVVAY. Topologically, residues 349 to 361 are extracellular; that stretch reads TIEKEENEGLATI. The segment at residues 362 to 373 is an intramembrane region (helical); the sequence is PACWWWATVSMT. A Selectivity filter motif is present at residues 374-379; that stretch reads TVGYGD. An intramembrane segment occupies 374–381; that stretch reads TVGYGDVV. The Extracellular segment spans residues 382–388; sequence PGTTAGK. A helical membrane pass occupies residues 389-417; sequence LTASACILAGILVVVLPITLIFNKFSHFY. At 418–477 the chain is on the cytoplasmic side; the sequence is RRQKQLESAMRSCDFGDGMKEVPSVNLRDYYAHKVKSLMASLTNMSRSSPSELSLDDSLH.

The protein belongs to the potassium channel family. S (TC 1.A.1.2) subfamily. Kv9.2/KCNS2 sub-subfamily. As to quaternary structure, heterotetramer with KCNB1 and KCNB2. Does not form homomultimers. As to expression, detected in brain, but not in the other tissues tested. Expression was highest in the olfactory bulb, cerebral cortex, hippocampus, habenula, basolateral amygdaloid nuclei and cerebellum.

The protein localises to the cell membrane. Functionally, potassium channel regulatory subunit that modulate the delayed rectifier voltage-gated potassium channel activity of KCNB1 and KCNB2 by altering their kinetics, expression levels, and shifting the half-inactivation potential to more polarized values. While it does not form functional channels on its own, it can form functional heterotetrameric channels with KCNB1 and KCNB2. Each regulatory subunit has unique regulatory properties that can lead to extensive inhibition, significant changes in kinetics, and/or substantial shifts in the voltage dependencies of the inactivation process. In Mus musculus (Mouse), this protein is Delayed-rectifier potassium channel regulatory subunit KCNS2.